The chain runs to 299 residues: GTPase Era (299 aa).

One can recognise an Era-type G domain in the interval 4 to 171; it reads KSGFVAILGR…VDILSENLGE (168 aa). The interval 12–19 is G1; that stretch reads GRPNVGKS. Residue 12 to 19 participates in GTP binding; that stretch reads GRPNVGKS. Residues 38 to 42 are G2; that stretch reads QTTRN. The G3 stretch occupies residues 59–62; sequence DTPG. Residues 59–63 and 121–124 each bind GTP; these read DTPGI and NKID. A G4 region spans residues 121-124; the sequence is NKID. The G5 stretch occupies residues 150 to 152; it reads ISA. The KH type-2 domain occupies 202-280; the sequence is TREEIPHSVA…FLETWVKVKK (79 aa).

This sequence belongs to the TRAFAC class TrmE-Era-EngA-EngB-Septin-like GTPase superfamily. Era GTPase family. Monomer.

It localises to the cytoplasm. The protein localises to the cell membrane. An essential GTPase that binds both GDP and GTP, with rapid nucleotide exchange. Plays a role in 16S rRNA processing and 30S ribosomal subunit biogenesis and possibly also in cell cycle regulation and energy metabolism. This chain is GTPase Era, found in Streptococcus pneumoniae (strain JJA).